Here is a 426-residue protein sequence, read N- to C-terminus: Anaerobic glycerol-3-phosphate dehydrogenase subunit C (426 aa).

2 consecutive 4Fe-4S ferredoxin-type domains span residues 21–53 (SYKYIDESFESCIKCTACTAVCPVSRNNPLYPG) and 67–99 (KSAELYDEALKYCTNCKRCEVACPSDVKIGDLI). Cysteine 32, cysteine 35, cysteine 38, cysteine 42, cysteine 79, cysteine 82, cysteine 85, and cysteine 89 together coordinate [4Fe-4S] cluster.

In terms of assembly, composed of a catalytic GlpA/B dimer and of GlpC.

The protein resides in the cell inner membrane. The protein operates within polyol metabolism; glycerol degradation via glycerol kinase pathway; glycerone phosphate from sn-glycerol 3-phosphate (anaerobic route): step 1/1. In terms of biological role, electron transfer protein; may also function as the membrane anchor for the GlpAB dimer. The protein is Anaerobic glycerol-3-phosphate dehydrogenase subunit C (glpC) of Haemophilus influenzae (strain ATCC 51907 / DSM 11121 / KW20 / Rd).